The primary structure comprises 372 residues: Cytochrome b (372 aa).

The next 4 helical transmembrane spans lie at 25–45 (FGSM…FLAI), 69–90 (WIMQ…YIHI), 105–125 (WLSG…GYVL), and 170–190 (FFAL…IHII). Positions 75 and 89 each coordinate heme b. Residues His174 and His188 each contribute to the heme b site. Position 193 (His193) interacts with a ubiquinone. Transmembrane regions (helical) follow at residues 218-238 (YKDM…LSFS), 280-300 (LGGA…PFTH), 312-332 (LSQI…WTAS), and 339-358 (FISI…ITIP).

It belongs to the cytochrome b family. As to quaternary structure, the cytochrome bc1 complex contains 3 respiratory subunits (MT-CYB, CYC1 and UQCRFS1), 2 core proteins (UQCRC1 and UQCRC2) and probably 6 low-molecular weight proteins. It depends on heme b as a cofactor.

It is found in the mitochondrion inner membrane. Its function is as follows. Component of the ubiquinol-cytochrome c reductase complex (complex III or cytochrome b-c1 complex) that is part of the mitochondrial respiratory chain. The b-c1 complex mediates electron transfer from ubiquinol to cytochrome c. Contributes to the generation of a proton gradient across the mitochondrial membrane that is then used for ATP synthesis. In Naja annulata annulata (Banded water cobra), this protein is Cytochrome b (MT-CYB).